Consider the following 508-residue polypeptide: Maturase K (508 aa).

This sequence belongs to the intron maturase 2 family. MatK subfamily.

Its subcellular location is the plastid. It localises to the chloroplast. Functionally, usually encoded in the trnK tRNA gene intron. Probably assists in splicing its own and other chloroplast group II introns. The protein is Maturase K of Coronilla varia (Crown vetch).